Here is a 1480-residue protein sequence, read N- to C-terminus: Cystic fibrosis transmembrane conductance regulator (1480 aa).

Residues 1–77 (MQRSPLEKAS…KLINALRRCF (77 aa)) lie on the Cytoplasmic side of the membrane. A helical transmembrane segment spans residues 78 to 98 (FWRFMFYGILLYLGEVTKAVQ). The ABC transmembrane type-1 1 domain maps to 81 to 365 (FMFYGILLYL…WAVQTWYDSL (285 aa)). The Extracellular segment spans residues 99–122 (PLLLGRIIASYDPDNKTERSIAIY). Residues 123–146 (LGIGLCLLFIVRTLLLHPAIFGLH) traverse the membrane as a helical segment. Residues 147-195 (HIGMQMRIAMFSLIYKKTLKLSSRVLDKISIGQLVSLLSNNLNKFDEGL) lie on the Cytoplasmic side of the membrane. The chain crosses the membrane as a helical span at residues 196–216 (ALAHFVWIAPLQVALLMGLIW). Over 217 to 222 (ELLQAS) the chain is Extracellular. A helical transmembrane segment spans residues 223 to 243 (VFCGLGFLIVLALFQAGLGRM). Topologically, residues 244 to 298 (MMKYRDQRAGKINERLVITSEMIENIQSVKAYCWEEAMEKMIENLRQTELKLTRK) are cytoplasmic. Residues 299–319 (AAYVRYFNSSAFFFSGFFVVF) form a helical membrane-spanning segment. Residues 320 to 339 (LSVLPYALIKGIILRKIFTT) are Extracellular-facing. A helical membrane pass occupies residues 340–358 (ISFCIVLRMAVTRQFPWAV). The Cytoplasmic portion of the chain corresponds to 359–858 (QTWYDSLGAI…YLRYITLHKS (500 aa)). ATP contacts are provided by residues Trp401, Ser434, 458 to 465 (GSTGAGKT), and Gln493. The ABC transporter 1 domain occupies 423 to 646 (NGHDNLFFSN…RPDFSSKLMG (224 aa)). Cys524 is lipidated: S-palmitoyl cysteine. Ser549 and Ser660 each carry phosphoserine. The disordered R region stretch occupies residues 654 to 831 (SSERRNSILT…EEINEEDLKE (178 aa)). Ser670 bears the Phosphoserine; by PKA mark. Residue Ser686 is modified to Phosphoserine. Residue Lys688 forms a Glycyl lysine isopeptide (Lys-Gly) (interchain with G-Cter in ubiquitin) linkage. Ser700 and Ser712 each carry phosphoserine. Thr717 carries the post-translational modification Phosphothreonine. Phosphoserine is present on residues Ser737, Ser753, Ser768, Ser790, Ser795, and Ser813. Residues 859-879 (LIFVLIWCLVIFLAEVAASLV) form a helical membrane-spanning segment. The region spanning 859-1155 (LIFVLIWCLV…AVNSSIDVDS (297 aa)) is the ABC transmembrane type-1 2 domain. Topologically, residues 880–918 (VLWLLGNTSFQDKGNSTYSRNNSYAVIITNTSSYYVFYI) are extracellular. Asn894, Asn900, and Asn909 each carry an N-linked (GlcNAc...) asparagine glycan. Residues 919–939 (YVGVADTLLALGFFRGLPLVH) form a discontinuously helical membrane-spanning segment. The Cytoplasmic portion of the chain corresponds to 940–990 (TLITVSKILHHKMLHSVLQAPMSTLNTLKAGGILNRFSKDIAILDDLLPLT). The helical transmembrane segment at 991 to 1011 (IFDFIQLLLIVIGAIAVVSVL) threads the bilayer. The Extracellular segment spans residues 1012–1013 (QP). Residues 1014 to 1034 (YIFLATVPVIAAFILLRAYFL) traverse the membrane as a helical segment. Residues 1035–1095 (QTSQQLKQLE…TANWFLYLST (61 aa)) are Cytoplasmic-facing. A helical transmembrane segment spans residues 1096-1116 (LRWFQMRIEMIFVIFFIAVTF). At 1117-1130 (ISILTTGEGEGTVG) the chain is on the extracellular side. A helical membrane pass occupies residues 1131–1151 (IILTLAMNIMSTLQWAVNSSI). Over 1152–1480 (DVDSLMRSVS…TEEEVQETRL (329 aa)) the chain is Cytoplasmic. Residues 1210-1443 (MTIKDLTAKY…KSLFQQAISH (234 aa)) form the ABC transporter 2 domain. ATP contacts are provided by residues Tyr1219 and 1244-1251 (GRTGSGKS). The interaction with GORASP2 stretch occupies residues 1386-1480 (RALKQAFADC…TEEEVQETRL (95 aa)). Cys1395 is lipidated: S-palmitoyl cysteine. Ser1444 and Ser1456 each carry phosphoserine. Residues 1452 to 1480 (HRNSSKYKSRPQIASLKEETEEEVQETRL) are disordered. Acidic residues predominate over residues 1470 to 1480 (ETEEEVQETRL). The short motif at 1478 to 1480 (TRL) is the PDZ-binding element.

It belongs to the ABC transporter superfamily. ABCC family. CFTR transporter (TC 3.A.1.202) subfamily. In terms of assembly, monomer; does not require oligomerization for channel activity. May form oligomers in the membrane. Interacts with SLC26A3, SLC26A6 and NHERF1. Interacts with SHANK2. Interacts with MYO6. Interacts (via C-terminus) with GOPC (via PDZ domain); this promotes CFTR internalization and thereby decreases channel activity. Interacts with SLC4A7 through NHERF1. Found in a complex with MYO5B and RAB11A. Interacts with ANO1. Interacts with SLC26A8. Interacts with AHCYL1; the interaction increases CFTR activity. Interacts with CSE1L. The core-glycosylated form interacts with GORASP2 (via PDZ GRASP-type 1 domain) in respone to ER stress. Interacts with MARCHF2; the interaction leads to CFTR ubiqtuitination and degradation. Interacts with ADGRG2. Post-translationally, N-glycosylated. Phosphorylated; cAMP treatment promotes phosphorylation and activates the channel. Dephosphorylation decreases the ATPase activity (in vitro). Phosphorylation at PKA sites activates the channel. Phosphorylation at PKC sites enhances the response to phosphorylation by PKA. Phosphorylated by AMPK; this inhibits channel activity. In terms of processing, ubiquitinated, leading to its degradation in the lysosome. Deubiquitination by USP10 in early endosomes enhances its endocytic recycling to the cell membrane. Ubiquitinated by RNF185 during ER stress. Ubiquitinated by MARCHF2.

It is found in the apical cell membrane. Its subcellular location is the early endosome membrane. It localises to the cell membrane. The protein localises to the recycling endosome membrane. The protein resides in the endoplasmic reticulum membrane. It is found in the nucleus. The enzyme catalyses ATP + H2O + closed Cl(-) channel = ADP + phosphate + open Cl(-) channel.. The catalysed reaction is chloride(in) = chloride(out). It catalyses the reaction hydrogencarbonate(in) = hydrogencarbonate(out). It carries out the reaction ATP + H2O = ADP + phosphate + H(+). In terms of biological role, epithelial ion channel that plays an important role in the regulation of epithelial ion and water transport and fluid homeostasis. Mediates the transport of chloride ions across the cell membrane. Possesses an intrinsic ATPase activity and utilizes ATP to gate its channel; the passive flow of anions through the channel is gated by cycles of ATP binding and hydrolysis by the ATP-binding domains. The ion channel is also permeable to HCO(3)(-); selectivity depends on the extracellular chloride concentration. Exerts its function also by modulating the activity of other ion channels and transporters. Contributes to the regulation of the pH and the ion content of the epithelial fluid layer. Modulates the activity of the epithelial sodium channel (ENaC) complex, in part by regulating the cell surface expression of the ENaC complex. May regulate bicarbonate secretion and salvage in epithelial cells by regulating the transporter SLC4A7. Can inhibit the chloride channel activity of ANO1. Plays a role in the chloride and bicarbonate homeostasis during sperm epididymal maturation and capacitation. This is Cystic fibrosis transmembrane conductance regulator from Plecturocebus moloch (Dusky titi monkey).